We begin with the raw amino-acid sequence, 363 residues long: tRNA-specific 2-thiouridylase MnmA (363 aa).

Residues A6–S13 and L32 each bind ATP. The active-site Nucleophile is the C101. Cysteines 101 and 193 form a disulfide. G125 is a binding site for ATP. Positions K143–Q145 are interaction with tRNA. Catalysis depends on C193, which acts as the Cysteine persulfide intermediate.

The protein belongs to the MnmA/TRMU family.

It localises to the cytoplasm. The enzyme catalyses S-sulfanyl-L-cysteinyl-[protein] + uridine(34) in tRNA + AH2 + ATP = 2-thiouridine(34) in tRNA + L-cysteinyl-[protein] + A + AMP + diphosphate + H(+). Functionally, catalyzes the 2-thiolation of uridine at the wobble position (U34) of tRNA, leading to the formation of s(2)U34. This Mycobacterium marinum (strain ATCC BAA-535 / M) protein is tRNA-specific 2-thiouridylase MnmA.